The following is a 307-amino-acid chain: Elongation factor Ts (307 aa).

The segment at 79–82 (TDFV) is involved in Mg(2+) ion dislocation from EF-Tu.

This sequence belongs to the EF-Ts family.

The protein localises to the cytoplasm. Its function is as follows. Associates with the EF-Tu.GDP complex and induces the exchange of GDP to GTP. It remains bound to the aminoacyl-tRNA.EF-Tu.GTP complex up to the GTP hydrolysis stage on the ribosome. The protein is Elongation factor Ts of Bartonella henselae (strain ATCC 49882 / DSM 28221 / CCUG 30454 / Houston 1) (Rochalimaea henselae).